The primary structure comprises 269 residues: Ribonuclease HII (269 aa).

The region spanning 79 to 269 is the RNase H type-2 domain; that stretch reads TYLAGADEVG…SFLKNILNTF (191 aa). Positions 85, 86, and 182 each coordinate a divalent metal cation.

Belongs to the RNase HII family. It depends on Mn(2+) as a cofactor. Requires Mg(2+) as cofactor.

The protein localises to the cytoplasm. It carries out the reaction Endonucleolytic cleavage to 5'-phosphomonoester.. Its function is as follows. Endonuclease that specifically degrades the RNA of RNA-DNA hybrids. In Clostridium novyi (strain NT), this protein is Ribonuclease HII.